Consider the following 333-residue polypeptide: F420-dependent glucose-6-phosphate dehydrogenase (333 aa).

Asp37 provides a ligand contact to coenzyme F420-(gamma-Glu)n. The Proton donor role is filled by His38. Residues Thr74 and 105-106 (SG) contribute to the coenzyme F420-(gamma-Glu)n site. Glu107 functions as the Proton acceptor in the catalytic mechanism. Residues Asn110, 174 to 175 (GG), and 177 to 178 (VV) contribute to the coenzyme F420-(gamma-Glu)n site. Thr192, Lys195, Lys256, and Arg280 together coordinate substrate.

The protein belongs to the F420-dependent glucose-6-phosphate dehydrogenase family. As to quaternary structure, homodimer.

It carries out the reaction oxidized coenzyme F420-(gamma-L-Glu)(n) + D-glucose 6-phosphate + H(+) = 6-phospho-D-glucono-1,5-lactone + reduced coenzyme F420-(gamma-L-Glu)(n). Its function is as follows. Catalyzes the coenzyme F420-dependent oxidation of glucose 6-phosphate (G6P) to 6-phosphogluconolactone. This is F420-dependent glucose-6-phosphate dehydrogenase from Amycolatopsis mediterranei (strain U-32).